A 108-amino-acid chain; its full sequence is Large ribosomal subunit protein eL30 (108 aa).

It belongs to the eukaryotic ribosomal protein eL30 family.

The sequence is that of Large ribosomal subunit protein eL30 (rpl30e) from Saccharolobus solfataricus (strain ATCC 35092 / DSM 1617 / JCM 11322 / P2) (Sulfolobus solfataricus).